The sequence spans 266 residues: Ribosomal RNA small subunit methyltransferase A (266 aa).

Histidine 13, leucine 15, glycine 40, glutamate 61, aspartate 85, and asparagine 104 together coordinate S-adenosyl-L-methionine.

The protein belongs to the class I-like SAM-binding methyltransferase superfamily. rRNA adenine N(6)-methyltransferase family. RsmA subfamily.

It localises to the cytoplasm. The catalysed reaction is adenosine(1518)/adenosine(1519) in 16S rRNA + 4 S-adenosyl-L-methionine = N(6)-dimethyladenosine(1518)/N(6)-dimethyladenosine(1519) in 16S rRNA + 4 S-adenosyl-L-homocysteine + 4 H(+). In terms of biological role, specifically dimethylates two adjacent adenosines (A1518 and A1519) in the loop of a conserved hairpin near the 3'-end of 16S rRNA in the 30S particle. May play a critical role in biogenesis of 30S subunits. This chain is Ribosomal RNA small subunit methyltransferase A, found in Parabacteroides distasonis (strain ATCC 8503 / DSM 20701 / CIP 104284 / JCM 5825 / NCTC 11152).